Reading from the N-terminus, the 205-residue chain is uncharacterized protein (205 aa).

This is an uncharacterized protein from Bacillus subtilis (strain 168).